The primary structure comprises 95 residues: Aspartyl/glutamyl-tRNA(Asn/Gln) amidotransferase subunit C (95 aa).

The protein belongs to the GatC family. As to quaternary structure, heterotrimer of A, B and C subunits.

The enzyme catalyses L-glutamyl-tRNA(Gln) + L-glutamine + ATP + H2O = L-glutaminyl-tRNA(Gln) + L-glutamate + ADP + phosphate + H(+). It carries out the reaction L-aspartyl-tRNA(Asn) + L-glutamine + ATP + H2O = L-asparaginyl-tRNA(Asn) + L-glutamate + ADP + phosphate + 2 H(+). In terms of biological role, allows the formation of correctly charged Asn-tRNA(Asn) or Gln-tRNA(Gln) through the transamidation of misacylated Asp-tRNA(Asn) or Glu-tRNA(Gln) in organisms which lack either or both of asparaginyl-tRNA or glutaminyl-tRNA synthetases. The reaction takes place in the presence of glutamine and ATP through an activated phospho-Asp-tRNA(Asn) or phospho-Glu-tRNA(Gln). The sequence is that of Aspartyl/glutamyl-tRNA(Asn/Gln) amidotransferase subunit C from Methylorubrum extorquens (strain CM4 / NCIMB 13688) (Methylobacterium extorquens).